Consider the following 50-residue polypeptide: Large ribosomal subunit protein bL36B (50 aa).

The protein belongs to the bacterial ribosomal protein bL36 family.

In Pseudomonas aeruginosa (strain UCBPP-PA14), this protein is Large ribosomal subunit protein bL36B.